Consider the following 362-residue polypeptide: tRNA/tmRNA (uracil-C(5))-methyltransferase (362 aa).

The S-adenosyl-L-methionine site is built by Gln182, Tyr210, Asn215, Glu231, and Asp293. Cys318 acts as the Nucleophile in catalysis. Glu352 acts as the Proton acceptor in catalysis.

Belongs to the class I-like SAM-binding methyltransferase superfamily. RNA M5U methyltransferase family. TrmA subfamily.

The catalysed reaction is uridine(54) in tRNA + S-adenosyl-L-methionine = 5-methyluridine(54) in tRNA + S-adenosyl-L-homocysteine + H(+). It catalyses the reaction uridine(341) in tmRNA + S-adenosyl-L-methionine = 5-methyluridine(341) in tmRNA + S-adenosyl-L-homocysteine + H(+). Its function is as follows. Dual-specificity methyltransferase that catalyzes the formation of 5-methyluridine at position 54 (m5U54) in all tRNAs, and that of position 341 (m5U341) in tmRNA (transfer-mRNA). The chain is tRNA/tmRNA (uracil-C(5))-methyltransferase from Neisseria meningitidis serogroup B (strain ATCC BAA-335 / MC58).